We begin with the raw amino-acid sequence, 830 residues long: Lon protease (830 aa).

The Lon N-terminal domain maps to 20–215; the sequence is LPAVAIRDVV…LLIKILANEV (196 aa). 367 to 374 serves as a coordination point for ATP; it reads GPPGVGKT. One can recognise a Lon proteolytic domain in the interval 602 to 781; that stretch reads ENGVGISTGL…DEIVKIAFEK (180 aa). Catalysis depends on residues S687 and K730. A disordered region spans residues 784–830; it reads PKSSFKKSKTAPKKESAKKAAKSKKPAVKKPAVKKTKQVKKTAKKKK. Positions 802–830 are enriched in basic residues; it reads KAAKSKKPAVKKPAVKKTKQVKKTAKKKK.

The protein belongs to the peptidase S16 family. Homohexamer. Organized in a ring with a central cavity.

The protein resides in the cytoplasm. The catalysed reaction is Hydrolysis of proteins in presence of ATP.. In terms of biological role, ATP-dependent serine protease that mediates the selective degradation of mutant and abnormal proteins as well as certain short-lived regulatory proteins. Required for cellular homeostasis and for survival from DNA damage and developmental changes induced by stress. Degrades polypeptides processively to yield small peptide fragments that are 5 to 10 amino acids long. Binds to DNA in a double-stranded, site-specific manner. The polypeptide is Lon protease (Elusimicrobium minutum (strain Pei191)).